Consider the following 113-residue polypeptide: Colicin-E1 immunity protein (113 aa).

Functionally, this protein is able to protect a cell, which harbors the plasmid ColE1 encoding colicin E1, against colicin E1. The chain is Colicin-E1 immunity protein (imm) from Escherichia coli.